Here is a 248-residue protein sequence, read N- to C-terminus: Tetrachloro-P-hydroquinone reductive dehalogenase (248 aa).

Residues 2–84 (PEVSLYNYTM…EAAKLGKVGI (83 aa)) enclose the GST N-terminal domain. One can recognise a GST C-terminal domain in the interval 133–248 (YAEKYPELRS…RVMPNWKGGI (116 aa)).

The protein belongs to the GST superfamily. As to quaternary structure, homodimer.

It carries out the reaction 2,6-dichlorohydroquinone + glutathione disulfide + chloride + H(+) = 2,3,6-trichlorohydroquinone + 2 glutathione. It catalyses the reaction 2,3,6-trichlorohydroquinone + glutathione disulfide + chloride = 2,3,5,6-tetrachlorohydroquinone + 2 glutathione. It participates in xenobiotic degradation; pentachlorophenol degradation. Its function is as follows. Sequential reduction of tetrachloro-p-hydroquinone to monochlorophenol, using glutathione as the reducing agent. This Sphingobium chlorophenolicum protein is Tetrachloro-P-hydroquinone reductive dehalogenase (pcpC).